Reading from the N-terminus, the 523-residue chain is GMP synthase [glutamine-hydrolyzing] (523 aa).

A Glutamine amidotransferase type-1 domain is found at 8 to 205 (RILILDFGSQ…IRELCECEAL (198 aa)). Cys85 functions as the Nucleophile in the catalytic mechanism. Residues His179 and Glu181 contribute to the active site. The GMPS ATP-PPase domain occupies 206–398 (WTPSNIISDA…LGLPYDMVYR (193 aa)). 233-239 (SGGVDSS) contributes to the ATP binding site.

As to quaternary structure, homodimer.

It carries out the reaction XMP + L-glutamine + ATP + H2O = GMP + L-glutamate + AMP + diphosphate + 2 H(+). The protein operates within purine metabolism; GMP biosynthesis; GMP from XMP (L-Gln route): step 1/1. Catalyzes the synthesis of GMP from XMP. The sequence is that of GMP synthase [glutamine-hydrolyzing] from Alcanivorax borkumensis (strain ATCC 700651 / DSM 11573 / NCIMB 13689 / SK2).